A 178-amino-acid polypeptide reads, in one-letter code: Cytochrome b6-f complex iron-sulfur subunit (178 aa).

A helical membrane pass occupies residues L20–I42. Residues W68–V161 form the Rieske domain. Positions 107, 109, 125, and 128 each coordinate [2Fe-2S] cluster. Cysteines 112 and 127 form a disulfide.

The protein belongs to the Rieske iron-sulfur protein family. In terms of assembly, the 4 large subunits of the cytochrome b6-f complex are cytochrome b6, subunit IV (17 kDa polypeptide, PetD), cytochrome f and the Rieske protein, while the 4 small subunits are PetG, PetL, PetM and PetN. The complex functions as a dimer. Requires [2Fe-2S] cluster as cofactor.

The protein localises to the cellular thylakoid membrane. The catalysed reaction is 2 oxidized [plastocyanin] + a plastoquinol + 2 H(+)(in) = 2 reduced [plastocyanin] + a plastoquinone + 4 H(+)(out). In terms of biological role, component of the cytochrome b6-f complex, which mediates electron transfer between photosystem II (PSII) and photosystem I (PSI), cyclic electron flow around PSI, and state transitions. This Prochlorococcus marinus (strain MIT 9303) protein is Cytochrome b6-f complex iron-sulfur subunit.